Reading from the N-terminus, the 396-residue chain is Elongation factor Tu (396 aa).

One can recognise a tr-type G domain in the interval 11–205 (KPHVNIGTIG…TVDEYIPTPE (195 aa)). The interval 20-27 (GHVDHGKT) is G1. GTP is bound at residue 20 to 27 (GHVDHGKT). Threonine 27 provides a ligand contact to Mg(2+). The interval 61-65 (GITIN) is G2. Residues 82–85 (DAPG) form a G3 region. GTP-binding positions include 82 to 86 (DAPGH) and 137 to 140 (NKVD). A G4 region spans residues 137 to 140 (NKVD). Residues 175–177 (SAL) form a G5 region.

It belongs to the TRAFAC class translation factor GTPase superfamily. Classic translation factor GTPase family. EF-Tu/EF-1A subfamily. Monomer.

The protein resides in the cytoplasm. The enzyme catalyses GTP + H2O = GDP + phosphate + H(+). In terms of biological role, GTP hydrolase that promotes the GTP-dependent binding of aminoacyl-tRNA to the A-site of ribosomes during protein biosynthesis. The sequence is that of Elongation factor Tu from Lactobacillus johnsonii (strain CNCM I-12250 / La1 / NCC 533).